The chain runs to 441 residues: Ribosomal protein uS12 methylthiotransferase RimO (441 aa).

The region spanning 8–118 (PKIGFVSLGC…VLEHVHHYVP (111 aa)) is the MTTase N-terminal domain. Residues C17, C53, C82, C150, C154, and C157 each contribute to the [4Fe-4S] cluster site. The Radical SAM core domain maps to 136–373 (LTPRHYAYLK…MQLQQQISAE (238 aa)). In terms of domain architecture, TRAM spans 376 to 441 (QEKVGREILV…DEYDLWGSRV (66 aa)).

This sequence belongs to the methylthiotransferase family. RimO subfamily. Requires [4Fe-4S] cluster as cofactor.

It localises to the cytoplasm. It catalyses the reaction L-aspartate(89)-[ribosomal protein uS12]-hydrogen + (sulfur carrier)-SH + AH2 + 2 S-adenosyl-L-methionine = 3-methylsulfanyl-L-aspartate(89)-[ribosomal protein uS12]-hydrogen + (sulfur carrier)-H + 5'-deoxyadenosine + L-methionine + A + S-adenosyl-L-homocysteine + 2 H(+). Functionally, catalyzes the methylthiolation of an aspartic acid residue of ribosomal protein uS12. The protein is Ribosomal protein uS12 methylthiotransferase RimO of Escherichia coli (strain SMS-3-5 / SECEC).